A 437-amino-acid chain; its full sequence is Glutamate-1-semialdehyde 2,1-aminomutase 1 (437 aa).

The residue at position 268 (Lys268) is an N6-(pyridoxal phosphate)lysine.

The protein belongs to the class-III pyridoxal-phosphate-dependent aminotransferase family. HemL subfamily. In terms of assembly, homodimer. The cofactor is pyridoxal 5'-phosphate.

The protein localises to the cytoplasm. It carries out the reaction (S)-4-amino-5-oxopentanoate = 5-aminolevulinate. It participates in porphyrin-containing compound metabolism; protoporphyrin-IX biosynthesis; 5-aminolevulinate from L-glutamyl-tRNA(Glu): step 2/2. The sequence is that of Glutamate-1-semialdehyde 2,1-aminomutase 1 from Halalkalibacterium halodurans (strain ATCC BAA-125 / DSM 18197 / FERM 7344 / JCM 9153 / C-125) (Bacillus halodurans).